Here is a 235-residue protein sequence, read N- to C-terminus: MDAPINPSSPTRSSYETALERQWLIKDEPSHHVDLGCHFTLEIKAFSPKMIELLETGSLTLGSVYQGLYNLIKDKDCKGLELDRDTTHGNKLHVLAAAFLCVLRKYENQVRFYNVKTKDSLTGEIQYMSRVHIGDDNLGLFDPDTYRMIGGSFPEGIYRLNLRTQLTPRGEDDGLEIIMGTILTVPVRGPADRQPLGVLMDRQLRQFPVGTNPWSSLGEAKPKGRSLSLLRGILM.

Belongs to the nucleorhabdovirus type-2 matrix protein family. In terms of assembly, homomultimer. Interacts with nucleoprotein and with the cytoplasmic domain of glycoprotein.

It localises to the virion membrane. Its subcellular location is the host endomembrane system. In terms of biological role, plays a major role in assembly and budding of virion. Completely covers the ribonucleoprotein coil and keep it in condensed bullet-shaped form. Inhibits viral transcription and stimulates replication. The polypeptide is Matrix protein (M) (Rottboellia (Sorghum)).